Here is a 655-residue protein sequence, read N- to C-terminus: Macrolide export ATP-binding/permease protein MacB (655 aa).

The region spanning 6–244 (IVLRGLRREY…VAAPTAAAAQ (239 aa)) is the ABC transporter domain. 42–49 (GASGSGKS) provides a ligand contact to ATP. The next 4 membrane-spanning stretches (helical) occupy residues 279–299 (FLTM…VAVG), 528–548 (LTLM…IGVM), 579–599 (FLIE…AVAY), and 618–638 (AGSI…FGYL).

It belongs to the ABC transporter superfamily. Macrolide exporter (TC 3.A.1.122) family. In terms of assembly, homodimer.

It is found in the cell inner membrane. In terms of biological role, non-canonical ABC transporter that contains transmembrane domains (TMD), which form a pore in the inner membrane, and an ATP-binding domain (NBD), which is responsible for energy generation. Confers resistance against macrolides. This Rhodopseudomonas palustris (strain BisB18) protein is Macrolide export ATP-binding/permease protein MacB.